The following is a 342-amino-acid chain: Putative glycosyltransferases (342 aa).

The next 2 membrane-spanning stretches (helical) occupy residues 227–247 (IFYLGAAIFIISSSAAGYLII) and 262–282 (VIVSIWMLGGVTIFCIGLVGI).

The protein belongs to the glycosyltransferase 2 family.

Its subcellular location is the cell membrane. In terms of biological role, may play only a redundant role in maintaining cell wall viability and bacterial virulence. This Mycobacterium tuberculosis (strain CDC 1551 / Oshkosh) protein is Putative glycosyltransferases (pimF).